The following is a 426-amino-acid chain: Protein prenyltransferase alpha subunit repeat-containing protein 1 (426 aa).

PFTA repeat units follow at residues alanine 86–proline 119, lysine 121–cysteine 154, glutamate 180–asparagine 213, and aspartate 219–leucine 252. The interval alanine 255–histidine 279 is disordered. A compositionally biased stretch (polar residues) spans threonine 262 to serine 275. Residues glutamate 290–arginine 323 form a PFTA 5 repeat.

Belongs to the protein prenyltransferase subunit alpha family.

The protein is Protein prenyltransferase alpha subunit repeat-containing protein 1 (ptar1) of Danio rerio (Zebrafish).